A 226-amino-acid polypeptide reads, in one-letter code: Cytidylate kinase (226 aa).

Gly-10–Thr-18 lines the ATP pocket.

It belongs to the cytidylate kinase family. Type 1 subfamily.

The protein resides in the cytoplasm. It carries out the reaction CMP + ATP = CDP + ADP. The catalysed reaction is dCMP + ATP = dCDP + ADP. This chain is Cytidylate kinase, found in Streptococcus equi subsp. equi (strain 4047).